A 114-amino-acid polypeptide reads, in one-letter code: Ribonuclease U2 (114 aa).

3 disulfides stabilise this stretch: cysteine 1–cysteine 54, cysteine 9–cysteine 113, and cysteine 55–cysteine 96. Aspartate 29, valine 30, alanine 31, asparagine 32, aspartate 37, and tyrosine 39 together coordinate Ca(2+). 39–49 (YPHQYYDEASE) serves as a coordination point for substrate. Histidine 41 is a catalytic residue. The active-site Proton acceptor is glutamate 62. Arginine 85 serves as a coordination point for substrate. The active-site Proton donor is the histidine 101. Substrate is bound at residue 108–110 (DGF).

The protein belongs to the ribonuclease U2 family.

It catalyses the reaction [RNA] containing adenosine + H2O = an [RNA fragment]-3'-adenosine-3'-phosphate + a 5'-hydroxy-ribonucleotide-3'-[RNA fragment].. The enzyme catalyses [RNA] containing guanosine + H2O = an [RNA fragment]-3'-guanosine-3'-phosphate + a 5'-hydroxy-ribonucleotide-3'-[RNA fragment].. This is Ribonuclease U2 (RNU2) from Ustilago sphaerogena (Smut fungus).